Here is a 142-residue protein sequence, read N- to C-terminus: Small ribosomal subunit protein bS6 (142 aa).

A compositionally biased stretch (basic and acidic residues) spans 110-133 (NKKPSHAKEKHEKTEHTHSHHAEE). Positions 110-142 (NKKPSHAKEKHEKTEHTHSHHAEEAESVGSHSE) are disordered.

Belongs to the bacterial ribosomal protein bS6 family.

Functionally, binds together with bS18 to 16S ribosomal RNA. This Helicobacter pylori (strain P12) protein is Small ribosomal subunit protein bS6.